We begin with the raw amino-acid sequence, 465 residues long: Pancreatic triacylglycerol lipase (465 aa).

The signal sequence occupies residues 1-16 (MLMLWTFAVLLGAVAG). 2 disulfide bridges follow: Cys-20/Cys-26 and Cys-107/Cys-118. Ser-169 serves as the catalytic Nucleophile. Catalysis depends on Asp-193, which acts as the Charge relay system. Ca(2+) is bound by residues Glu-204, Arg-207, Asp-209, and Asp-212. Cysteines 254 and 278 form a disulfide. The active-site Charge relay system is the His-280. Disulfide bonds link Cys-302–Cys-313, Cys-316–Cys-321, and Cys-449–Cys-465. The PLAT domain occupies 355–465 (WRYQVTVTLS…EDVLLTLSPC (111 aa)).

This sequence belongs to the AB hydrolase superfamily. Lipase family. As to quaternary structure, forms a 1:1 stoichiometric complex with (pro)colipase/CLPS. In terms of tissue distribution, pancreas.

It is found in the secreted. It carries out the reaction a triacylglycerol + H2O = a diacylglycerol + a fatty acid + H(+). It catalyses the reaction 1,2,3-tri-(9Z-octadecenoyl)-glycerol + H2O = di-(9Z)-octadecenoylglycerol + (9Z)-octadecenoate + H(+). The enzyme catalyses 1,2,3-tributanoylglycerol + H2O = dibutanoylglycerol + butanoate + H(+). The catalysed reaction is all-trans-retinyl hexadecanoate + H2O = all-trans-retinol + hexadecanoate + H(+). It carries out the reaction 1,2-di-(9Z-octadecenoyl)-glycerol + H2O = (9Z-octadecenoyl)-glycerol + (9Z)-octadecenoate + H(+). With respect to regulation, inhibited by bile salts, is reactivated by (pro)colipase/CLPS. In terms of biological role, plays an important role in fat metabolism. It preferentially splits the esters of long-chain fatty acids at positions 1 and 3, producing mainly 2-monoacylglycerol and free fatty acids, and shows considerably higher activity against insoluble emulsified substrates than against soluble ones. This chain is Pancreatic triacylglycerol lipase, found in Mus musculus (Mouse).